The following is a 59-amino-acid chain: UPF0181 protein YoaH (59 aa).

It belongs to the UPF0181 family.

This chain is UPF0181 protein YoaH, found in Salmonella arizonae (strain ATCC BAA-731 / CDC346-86 / RSK2980).